The primary structure comprises 453 residues: Bifunctional protein GlmU (453 aa).

The tract at residues 1–226 (MKFSTVILAA…SIEVEGVNDR (226 aa)) is pyrophosphorylase. Residues 8-11 (LAAG), K22, Q73, 78-79 (GT), 100-102 (YGD), G137, E151, N166, and N224 each bind UDP-N-acetyl-alpha-D-glucosamine. D102 serves as a coordination point for Mg(2+). N224 lines the Mg(2+) pocket. Residues 227-247 (IQLARLERAFQARQAKKLLEQ) are linker. The segment at 248–453 (GVMLRDPARF…AGWQRPAKKK (206 aa)) is N-acetyltransferase. 2 residues coordinate UDP-N-acetyl-alpha-D-glucosamine: R330 and K348. H360 acts as the Proton acceptor in catalysis. Positions 363 and 374 each coordinate UDP-N-acetyl-alpha-D-glucosamine. Acetyl-CoA-binding positions include A377, 383-384 (NY), S402, A420, and R437.

In the N-terminal section; belongs to the N-acetylglucosamine-1-phosphate uridyltransferase family. This sequence in the C-terminal section; belongs to the transferase hexapeptide repeat family. Homotrimer. Mg(2+) is required as a cofactor.

The protein resides in the cytoplasm. The catalysed reaction is alpha-D-glucosamine 1-phosphate + acetyl-CoA = N-acetyl-alpha-D-glucosamine 1-phosphate + CoA + H(+). It catalyses the reaction N-acetyl-alpha-D-glucosamine 1-phosphate + UTP + H(+) = UDP-N-acetyl-alpha-D-glucosamine + diphosphate. The protein operates within nucleotide-sugar biosynthesis; UDP-N-acetyl-alpha-D-glucosamine biosynthesis; N-acetyl-alpha-D-glucosamine 1-phosphate from alpha-D-glucosamine 6-phosphate (route II): step 2/2. Its pathway is nucleotide-sugar biosynthesis; UDP-N-acetyl-alpha-D-glucosamine biosynthesis; UDP-N-acetyl-alpha-D-glucosamine from N-acetyl-alpha-D-glucosamine 1-phosphate: step 1/1. It functions in the pathway bacterial outer membrane biogenesis; LPS lipid A biosynthesis. Catalyzes the last two sequential reactions in the de novo biosynthetic pathway for UDP-N-acetylglucosamine (UDP-GlcNAc). The C-terminal domain catalyzes the transfer of acetyl group from acetyl coenzyme A to glucosamine-1-phosphate (GlcN-1-P) to produce N-acetylglucosamine-1-phosphate (GlcNAc-1-P), which is converted into UDP-GlcNAc by the transfer of uridine 5-monophosphate (from uridine 5-triphosphate), a reaction catalyzed by the N-terminal domain. The polypeptide is Bifunctional protein GlmU (Vibrio cholerae serotype O1 (strain ATCC 39541 / Classical Ogawa 395 / O395)).